The chain runs to 367 residues: Histidinol-phosphate aminotransferase 1 (367 aa).

K229 is subject to N6-(pyridoxal phosphate)lysine.

The protein belongs to the class-II pyridoxal-phosphate-dependent aminotransferase family. Histidinol-phosphate aminotransferase subfamily. As to quaternary structure, homodimer. Pyridoxal 5'-phosphate is required as a cofactor.

The catalysed reaction is L-histidinol phosphate + 2-oxoglutarate = 3-(imidazol-4-yl)-2-oxopropyl phosphate + L-glutamate. The protein operates within amino-acid biosynthesis; L-histidine biosynthesis; L-histidine from 5-phospho-alpha-D-ribose 1-diphosphate: step 7/9. The sequence is that of Histidinol-phosphate aminotransferase 1 (hisC1) from Mesorhizobium japonicum (strain LMG 29417 / CECT 9101 / MAFF 303099) (Mesorhizobium loti (strain MAFF 303099)).